The following is a 650-amino-acid chain: Threonine--tRNA ligase (650 aa).

Positions 5–67 (NKSMFIKLKD…QEGDQVILWG (63 aa)) constitute a TGS domain. The catalytic stretch occupies residues 246–537 (DHKLLGAKLD…LIEHYVGKFP (292 aa)). Zn(2+)-binding residues include C337, H388, and H514.

It belongs to the class-II aminoacyl-tRNA synthetase family. In terms of assembly, homodimer. Zn(2+) is required as a cofactor.

Its subcellular location is the cytoplasm. The catalysed reaction is tRNA(Thr) + L-threonine + ATP = L-threonyl-tRNA(Thr) + AMP + diphosphate + H(+). In terms of biological role, catalyzes the attachment of threonine to tRNA(Thr) in a two-step reaction: L-threonine is first activated by ATP to form Thr-AMP and then transferred to the acceptor end of tRNA(Thr). Also edits incorrectly charged L-seryl-tRNA(Thr). In Protochlamydia amoebophila (strain UWE25), this protein is Threonine--tRNA ligase.